The sequence spans 271 residues: 3-methyl-2-oxobutanoate hydroxymethyltransferase (271 aa).

Residues aspartate 51 and aspartate 90 each coordinate Mg(2+). 3-methyl-2-oxobutanoate-binding positions include 51–52 (DS), aspartate 90, and lysine 118. Residue glutamate 120 coordinates Mg(2+). Residue glutamate 186 is the Proton acceptor of the active site.

Belongs to the PanB family. As to quaternary structure, homodecamer; pentamer of dimers. The cofactor is Mg(2+).

The protein localises to the cytoplasm. The enzyme catalyses 3-methyl-2-oxobutanoate + (6R)-5,10-methylene-5,6,7,8-tetrahydrofolate + H2O = 2-dehydropantoate + (6S)-5,6,7,8-tetrahydrofolate. It participates in cofactor biosynthesis; (R)-pantothenate biosynthesis; (R)-pantoate from 3-methyl-2-oxobutanoate: step 1/2. Functionally, catalyzes the reversible reaction in which hydroxymethyl group from 5,10-methylenetetrahydrofolate is transferred onto alpha-ketoisovalerate to form ketopantoate. The chain is 3-methyl-2-oxobutanoate hydroxymethyltransferase from Xanthomonas campestris pv. campestris (strain 8004).